The sequence spans 798 residues: Copalyl diphosphate synthase 1, chloroplastic (798 aa).

The transit peptide at 1–72 directs the protein to the chloroplast; it reads MASLSTMHLI…SKVAGINRVA (72 aa). Position 251 (Lys-251) interacts with substrate. 2 residues coordinate Mg(2+): Asp-383 and Asp-385. Positions 383–386 match the DXDD motif motif; sequence DIDD. Lys-469 serves as a coordination point for substrate.

The protein belongs to the terpene synthase family. Tpsc subfamily. It depends on Mg(2+) as a cofactor. As to expression, highly expressed in roots, and, at low levels, in stems and leaves.

It is found in the plastid. The protein resides in the chloroplast. It catalyses the reaction (2E,6E,10E)-geranylgeranyl diphosphate = (+)-copalyl diphosphate. Its pathway is secondary metabolite biosynthesis; terpenoid biosynthesis. In terms of biological role, involved in the biosynthesis of ent-kaurene diterpenoids natural products such as oridonin, miltiradiene, eriocalyxin B and nezukol, known to exhibit antitumor, anti-inflammatory and antibacterial activities. Catalyzes the conversion of (2E,6E,10E)-geranylgeranyl diphosphate (GGPP) to (+)-copalyl diphosphate ((+)-CPP). The sequence is that of Copalyl diphosphate synthase 1, chloroplastic from Isodon rubescens (Rabdosia rubescens).